A 76-amino-acid chain; its full sequence is YRIASSSIAKMKTAVFLVGLLFLGLVFADEAAIDSEFDQSIDKRGCIATGSFCTLSKGCCTKNCGWNFKCNPPNQK.

The first 28 residues, 1–28 (YRIASSSIAKMKTAVFLVGLLFLGLVFA), serve as a signal peptide directing secretion. Residues 29-44 (DEAAIDSEFDQSIDKR) constitute a propeptide that is removed on maturation. Disulfide bonds link Cys46-Cys60, Cys53-Cys64, and Cys59-Cys70. Pro72 and Pro73 each carry 4-hydroxyproline.

The protein belongs to the nemertide family. In terms of tissue distribution, confined to the epidermis and to the mucus layer.

It is found in the secreted. Its function is as follows. Highly potent toxin against insect sodium channel (Nav) and with less potent activity against mammalian sodium channels. Potently inhibits inactivation of insect sodium channels of B.germanica (BgNav1) (EC(50)=8.6 nM), D.melanogaster (Dm Nav1), and arachnid sodium channel V.destructor (VdNav1). Also delays the inactivation of most mammalian Nav channels tested (human Nav1.1/SCN1A; EC(50)=124.1 nM, rat Nav1.2/SCN2A; EC(50)=359.6 nM, rat Nav1.3/SCN3A; EC(50)=135.4 nM, rat Nav1.4/SCN4A; EC(50)=145.5 nM, human Nav1.5/SCN5A; EC(50)=138.3 nM, mouse Nav1.6/SCN8A; EC(50)=240.4 nM, human Nav1.9/SCN9A; EC(50)=76.5 nM). 1 uM is enough to completely inhibits the inactivation, resulting in sustained non-inactivating currents. In addition, the toxin significantly enhances the recovery from inactivation, and the open state is not required for the toxin to interact with the channel. In vivo, injection into green crabs (Carcinus maenas at 1 mug/kg) of small doses (1-5 ug/kg) results in slow and fast permanent paralysis, whereas injection of high doses (more than 10 ug/kg) causes death. Injection into juvenile Blaptica dubia cockroaches results in death or permanent paralysis at doses higher than 7.1 ug/kg. Injection into brine shrimp (Artemia salina) stops movement or causes death after 24 hours (EC(50)=0.3 uM). In the rare inherited cardiac arrhythmia Brugada syndrome 1 (BRGDA1), this toxin is able to restore the loss of function by reducing channel inactivation, without affecting activation, by binding to Nav1.5/SCN5A. This Lineus lacteus (Ribbon worm) protein is Nemertide alpha-1.